We begin with the raw amino-acid sequence, 860 residues long: DDB1- and CUL4-associated factor 6 (860 aa).

WD repeat units follow at residues 49–88, 92–133, 139–179, 189–229, and 251–290; these read VHDG…VLTT, GHRA…ETNR, CHYG…SCTK, NCRR…TRAT, and NKSC…AREL. 2 stretches are compositionally biased toward basic and acidic residues: residues 288 to 303 and 312 to 334; these read RELK…EELR and LRGD…RDGE. Disordered stretches follow at residues 288 to 340, 355 to 392, 407 to 490, and 502 to 675; these read RELK…PNVS, EASE…SPDL, QFLQ…TTST, and IASS…GPGD. S336 is subject to Phosphoserine. 2 stretches are compositionally biased toward polar residues: residues 379–388 and 409–421; these read DISTLPTVPS and LQPS…SAQA. Residues 422–441 are compositionally biased toward low complexity; that stretch reads HSTSSPTESPHSTPLLSSPD. Over residues 457 to 467 the composition is skewed to basic and acidic residues; sequence HQSDNNNEKLS. Residues 480–490 are compositionally biased toward polar residues; that stretch reads HYSTEGTTTST. The span at 502-511 shows a compositional bias: low complexity; it reads IASSSRGIGS. Residues 535-549 are compositionally biased toward basic and acidic residues; that stretch reads SETKAPEESSEDVTK. Positions 614–626 are enriched in low complexity; that stretch reads TSTESATNENNTN. Positions 627 to 636 are enriched in polar residues; the sequence is PEPQFQTEAT. The residue at position 649 (S649) is a Phosphoserine. Position 654 is a phosphothreonine (T654). Phosphoserine is present on S657. The IQ domain occupies 676–705; that stretch reads RRSAVARIQEFFRRRKERKEMEELDTLNIR. 2 WD repeats span residues 718 to 756 and 759 to 798; these read NSRT…HLML and ADNH…RIFN. Phosphoserine occurs at positions 847 and 850.

As to quaternary structure, interacts with the nuclear receptors NR3C1 and AR in the presence of ligand. Interacts with DDB1, CUL4A and CUL4B. In terms of tissue distribution, highly expressed in skeletal muscle and testis. Expressed to a lesser degree in heart, prostate, and adrenal gland.

It localises to the nucleus. It functions in the pathway protein modification; protein ubiquitination. Ligand-dependent coactivator of nuclear receptors. Enhance transcriptional activity of the nuclear receptors NR3C1 and AR. May function as a substrate receptor for CUL4-DDB1 E3 ubiquitin-protein ligase complex. This is DDB1- and CUL4-associated factor 6 (DCAF6) from Homo sapiens (Human).